A 115-amino-acid polypeptide reads, in one-letter code: Glycine cleavage system H-like protein (115 aa).

Residues 17 to 99 (VVRLGLTEKM…EGEGWLAVVR (83 aa)) form the Lipoyl-binding domain. Lys58 carries the post-translational modification N6-lipoyllysine.

Belongs to the GcvH family. The cofactor is (R)-lipoate.

The polypeptide is Glycine cleavage system H-like protein (Chlamydia pneumoniae (Chlamydophila pneumoniae)).